The primary structure comprises 575 residues: 2-isopropylmalate synthase (575 aa).

The region spanning 40–314 (PRWCAVDLRD…DPQIDFSDID (275 aa)) is the Pyruvate carboxyltransferase domain. Residues aspartate 49, histidine 253, histidine 255, and asparagine 289 each contribute to the Mg(2+) site. Residues 456 to 575 (SGSGTPEWGR…IVSAVNRALR (120 aa)) form a regulatory domain region.

It belongs to the alpha-IPM synthase/homocitrate synthase family. LeuA type 2 subfamily. In terms of assembly, homodimer. Mg(2+) is required as a cofactor.

The protein localises to the cytoplasm. The enzyme catalyses 3-methyl-2-oxobutanoate + acetyl-CoA + H2O = (2S)-2-isopropylmalate + CoA + H(+). The protein operates within amino-acid biosynthesis; L-leucine biosynthesis; L-leucine from 3-methyl-2-oxobutanoate: step 1/4. In terms of biological role, catalyzes the condensation of the acetyl group of acetyl-CoA with 3-methyl-2-oxobutanoate (2-ketoisovalerate) to form 3-carboxy-3-hydroxy-4-methylpentanoate (2-isopropylmalate). In Kineococcus radiotolerans (strain ATCC BAA-149 / DSM 14245 / SRS30216), this protein is 2-isopropylmalate synthase.